A 326-amino-acid polypeptide reads, in one-letter code: D-amino-acid oxidase (326 aa).

FAD is bound by residues Gly-14, Val-15, Ile-16, Asp-36, Ser-44, Ala-48, Ala-49, Ile-50, and Val-157. Residues Tyr-219 and Arg-274 each contribute to the D-proline site. Tyr-219 and Arg-274 together coordinate D-serine. FAD contacts are provided by Arg-274, Gly-299, Gly-300, Gly-302, and Thr-304. Gly-300 contributes to the D-proline binding site. Gly-300 lines the D-serine pocket.

It belongs to the DAMOX/DASOX family. In terms of assembly, homodimer. FAD serves as cofactor.

It is found in the cytoplasm. The protein resides in the secreted. The protein localises to the cell wall. The enzyme catalyses a D-alpha-amino acid + O2 + H2O = a 2-oxocarboxylate + H2O2 + NH4(+). The catalysed reaction is D-phenylalanine + O2 + H2O = 3-phenylpyruvate + H2O2 + NH4(+). It carries out the reaction D-lysine + O2 + H2O = 6-amino-2-oxohexanoate + H2O2 + NH4(+). It catalyses the reaction D-methionine + O2 + H2O = 4-methylsulfanyl-2-oxobutanoate + H2O2 + NH4(+). The enzyme catalyses D-arginine + O2 + H2O = 5-guanidino-2-oxopentanoate + H2O2 + NH4(+). The catalysed reaction is D-ornithine + O2 + H2O = 5-amino-2-oxopentanoate + H2O2 + NH4(+). It carries out the reaction D-leucine + O2 + H2O = 4-methyl-2-oxopentanoate + H2O2 + NH4(+). It catalyses the reaction D-alanine + O2 + H2O = pyruvate + H2O2 + NH4(+). The enzyme catalyses D-valine + O2 + H2O = 3-methyl-2-oxobutanoate + H2O2 + NH4(+). The catalysed reaction is D-histidine + O2 + H2O = 3-(imidazol-5-yl)pyruvate + H2O2 + NH4(+). Functionally, catalyzes the oxidative deamination of D-amino acids with broad substrate specificity. The chain is D-amino-acid oxidase from Glutamicibacter protophormiae (Brevibacterium protophormiae).